Consider the following 1121-residue polypeptide: Putative ATP-dependent RNA helicase ECM32 (1121 aa).

Residues 157–187 (NSTRKPRKKGGRRVGRGKKGRKGAKIKKEKK) are disordered. Basic residues predominate over residues 160 to 184 (RKPRKKGGRRVGRGKKGRKGAKIKK). Ser227 is modified (phosphoserine). The tract at residues 233-452 (AKVSKSETSR…NQEKNNGKTK (220 aa)) is disordered. Basic residues predominate over residues 251-263 (NKGKGNKANHKKN). The segment covering 278 to 287 (IRNNVRNSQP) has biased composition (polar residues). Over residues 307–316 (GKNESVDKHQ) the composition is skewed to basic and acidic residues. A compositionally biased stretch (low complexity) spans 323 to 336 (LNGNGSGSTNTTGL). Basic and acidic residues predominate over residues 342–363 (DHAGQKTKGNDKTGNKNPREAK). Over residues 376–413 (KSNNQPNKGTSRWTIGSDTESSREPSISPNENTTSITK) the composition is skewed to polar residues. Ser392 is modified (phosphoserine). Residues 426 to 452 (LNEKSKTTTMPKKLETKNQEKNNGKTK) show a composition bias toward basic and acidic residues. Thr465 carries the phosphothreonine modification. 670-677 (GPPGTGKT) contributes to the ATP binding site.

It belongs to the DNA2/NAM7 helicase family. In terms of assembly, interacts with the peptidyl release factors SUP35 and weakly with SUP45.

Its subcellular location is the cytoplasm. The enzyme catalyses ATP + H2O = ADP + phosphate + H(+). Probable RNA helicase, which may be involved in modulation of the translation termination process. Probably unwinds double-stranded RNA. In vitro, unwinds covalently closed, circular DNA in the presence of a DNA topoisomerase TOP1 and replication factor-A protein RFA1. The sequence is that of Putative ATP-dependent RNA helicase ECM32 (ECM32) from Saccharomyces cerevisiae (strain ATCC 204508 / S288c) (Baker's yeast).